The primary structure comprises 380 residues: WAT1-related protein At2g37460 (380 aa).

A run of 10 helical transmembrane segments spans residues phenylalanine 16 to valine 36, valine 45 to phenylalanine 65, proline 71 to isoleucine 91, phenylalanine 107 to glycine 127, valine 142 to valine 162, glycine 187 to isoleucine 207, leucine 216 to valine 236, leucine 254 to valine 274, phenylalanine 282 to phenylalanine 302, and methionine 306 to tryptophan 326. Residues alanine 27–arginine 134 enclose the EamA 1 domain. One can recognise an EamA 2 domain in the interval phenylalanine 196 to isoleucine 325.

Belongs to the drug/metabolite transporter (DMT) superfamily. Plant drug/metabolite exporter (P-DME) (TC 2.A.7.4) family.

It is found in the membrane. In Arabidopsis thaliana (Mouse-ear cress), this protein is WAT1-related protein At2g37460.